The sequence spans 468 residues: Probable Xaa-Pro aminopeptidase pepP (468 aa).

Mn(2+) is bound by residues aspartate 265, aspartate 276, glutamate 399, and glutamate 439.

Belongs to the peptidase M24B family. Mn(2+) serves as cofactor.

It carries out the reaction Release of any N-terminal amino acid, including proline, that is linked to proline, even from a dipeptide or tripeptide.. In terms of biological role, catalyzes the removal of a penultimate prolyl residue from the N-termini of peptides. The sequence is that of Probable Xaa-Pro aminopeptidase pepP (pepP) from Aspergillus fumigatus (strain CBS 144.89 / FGSC A1163 / CEA10) (Neosartorya fumigata).